The sequence spans 458 residues: Elongation factor 1-alpha (458 aa).

N,N,N-trimethylglycine is present on G2. Residue K3 is modified to N6,N6-dimethyllysine; alternate. The residue at position 3 (K3) is an N6-methyllysine; alternate. A tr-type G domain is found at 5 to 240 (KTHVNVVVIG…DAIEPPVRPS (236 aa)). A G1 region spans residues 14-21 (GHVDSGKS). Residue 14–21 (GHVDSGKS) coordinates GTP. K30 is subject to N6-methyllysine. Residues 70–74 (GITID) are G2. K79 is subject to N6,N6,N6-trimethyllysine. The tract at residues 91–94 (DAPG) is G3. Residues 91–95 (DAPGH) and 153–156 (NKMD) each bind GTP. The tract at residues 153 to 156 (NKMD) is G4. The interval 192–194 (SGW) is G5. K316 is modified (N6,N6-dimethyllysine; alternate). K316 is modified (N6-methyllysine; alternate). K390 carries the post-translational modification N6-methyllysine.

It belongs to the TRAFAC class translation factor GTPase superfamily. Classic translation factor GTPase family. EF-Tu/EF-1A subfamily.

It localises to the cytoplasm. Its function is as follows. This protein promotes the GTP-dependent binding of aminoacyl-tRNA to the A-site of ribosomes during protein biosynthesis. The chain is Elongation factor 1-alpha (TEF-1) from Mucor circinelloides f. lusitanicus (Mucor racemosus var. lusitanicus).